The primary structure comprises 340 residues: Holliday junction branch migration complex subunit RuvB (340 aa).

Residues M1–Y184 are large ATPase domain (RuvB-L). ATP-binding positions include L23, R24, G65, K68, T69, T70, E131–F133, R174, Y184, and R221. T69 serves as a coordination point for Mg(2+). The segment at N185–H255 is small ATPAse domain (RuvB-S). A head domain (RuvB-H) region spans residues A258 to F340. DNA is bound by residues R313 and R318.

Belongs to the RuvB family. Homohexamer. Forms an RuvA(8)-RuvB(12)-Holliday junction (HJ) complex. HJ DNA is sandwiched between 2 RuvA tetramers; dsDNA enters through RuvA and exits via RuvB. An RuvB hexamer assembles on each DNA strand where it exits the tetramer. Each RuvB hexamer is contacted by two RuvA subunits (via domain III) on 2 adjacent RuvB subunits; this complex drives branch migration. In the full resolvosome a probable DNA-RuvA(4)-RuvB(12)-RuvC(2) complex forms which resolves the HJ.

It is found in the cytoplasm. The catalysed reaction is ATP + H2O = ADP + phosphate + H(+). In terms of biological role, the RuvA-RuvB-RuvC complex processes Holliday junction (HJ) DNA during genetic recombination and DNA repair, while the RuvA-RuvB complex plays an important role in the rescue of blocked DNA replication forks via replication fork reversal (RFR). RuvA specifically binds to HJ cruciform DNA, conferring on it an open structure. The RuvB hexamer acts as an ATP-dependent pump, pulling dsDNA into and through the RuvAB complex. RuvB forms 2 homohexamers on either side of HJ DNA bound by 1 or 2 RuvA tetramers; 4 subunits per hexamer contact DNA at a time. Coordinated motions by a converter formed by DNA-disengaged RuvB subunits stimulates ATP hydrolysis and nucleotide exchange. Immobilization of the converter enables RuvB to convert the ATP-contained energy into a lever motion, pulling 2 nucleotides of DNA out of the RuvA tetramer per ATP hydrolyzed, thus driving DNA branch migration. The RuvB motors rotate together with the DNA substrate, which together with the progressing nucleotide cycle form the mechanistic basis for DNA recombination by continuous HJ branch migration. Branch migration allows RuvC to scan DNA until it finds its consensus sequence, where it cleaves and resolves cruciform DNA. This Flavobacterium psychrophilum (strain ATCC 49511 / DSM 21280 / CIP 103535 / JIP02/86) protein is Holliday junction branch migration complex subunit RuvB.